The chain runs to 261 residues: Cytochrome c oxidase subunit 3 (261 aa).

The Mitochondrial matrix portion of the chain corresponds to Met1 to Pro15. A helical membrane pass occupies residues Trp16–Trp34. The Mitochondrial intermembrane portion of the chain corresponds to Phe35–Thr40. The helical transmembrane segment at Ile41–Thr66 threads the bilayer. Topologically, residues Phe67–Thr72 are mitochondrial matrix. A helical transmembrane segment spans residues Pro73–Ser105. Over Leu106–Glu128 the chain is Mitochondrial intermembrane. The helical transmembrane segment at Val129 to Met152 threads the bilayer. Topologically, residues Glu153 to His155 are mitochondrial matrix. Residues Arg156–Glu183 traverse the membrane as a helical segment. At Ala184–Asp190 the chain is on the mitochondrial intermembrane side. A helical transmembrane segment spans residues Gly191–Leu223. At Lys224–His232 the chain is on the mitochondrial matrix side. A helical transmembrane segment spans residues Phe233–Ile256. At Tyr257–Ser261 the chain is on the mitochondrial intermembrane side.

This sequence belongs to the cytochrome c oxidase subunit 3 family. As to quaternary structure, component of the cytochrome c oxidase (complex IV, CIV), a multisubunit enzyme composed of 14 subunits. The complex is composed of a catalytic core of 3 subunits MT-CO1, MT-CO2 and MT-CO3, encoded in the mitochondrial DNA, and 11 supernumerary subunits COX4I, COX5A, COX5B, COX6A, COX6B, COX6C, COX7A, COX7B, COX7C, COX8 and NDUFA4, which are encoded in the nuclear genome. The complex exists as a monomer or a dimer and forms supercomplexes (SCs) in the inner mitochondrial membrane with NADH-ubiquinone oxidoreductase (complex I, CI) and ubiquinol-cytochrome c oxidoreductase (cytochrome b-c1 complex, complex III, CIII), resulting in different assemblies (supercomplex SCI(1)III(2)IV(1) and megacomplex MCI(2)III(2)IV(2)).

It is found in the mitochondrion inner membrane. It catalyses the reaction 4 Fe(II)-[cytochrome c] + O2 + 8 H(+)(in) = 4 Fe(III)-[cytochrome c] + 2 H2O + 4 H(+)(out). In terms of biological role, component of the cytochrome c oxidase, the last enzyme in the mitochondrial electron transport chain which drives oxidative phosphorylation. The respiratory chain contains 3 multisubunit complexes succinate dehydrogenase (complex II, CII), ubiquinol-cytochrome c oxidoreductase (cytochrome b-c1 complex, complex III, CIII) and cytochrome c oxidase (complex IV, CIV), that cooperate to transfer electrons derived from NADH and succinate to molecular oxygen, creating an electrochemical gradient over the inner membrane that drives transmembrane transport and the ATP synthase. Cytochrome c oxidase is the component of the respiratory chain that catalyzes the reduction of oxygen to water. Electrons originating from reduced cytochrome c in the intermembrane space (IMS) are transferred via the dinuclear copper A center (CU(A)) of subunit 2 and heme A of subunit 1 to the active site in subunit 1, a binuclear center (BNC) formed by heme A3 and copper B (CU(B)). The BNC reduces molecular oxygen to 2 water molecules using 4 electrons from cytochrome c in the IMS and 4 protons from the mitochondrial matrix. The sequence is that of Cytochrome c oxidase subunit 3 (MT-CO3) from Tragelaphus strepsiceros (Greater kudu).